A 733-amino-acid polypeptide reads, in one-letter code: Protein psiM (733 aa).

Residues 1–26 form the signal peptide; it reads MKKINNNKIFVLFLTILLYLLNITTA. N-linked (GlcNAc...) asparagine glycosylation is found at Asn-22, Asn-65, and Asn-96. At 27–672 the chain is on the extracellular side; sequence QKPVSINIKI…VCQKAALVST (646 aa). The PA14 domain maps to 114 to 260; sequence NYDSDSGNYI…YDYCGVCNGD (147 aa). Asn-277, Asn-336, Asn-379, Asn-428, Asn-471, Asn-537, Asn-573, and Asn-641 each carry an N-linked (GlcNAc...) asparagine glycan. A helical transmembrane segment spans residues 673–693; that stretch reads AVIASVVVVGAVVLGAAIFAG. The Cytoplasmic portion of the chain corresponds to 694–733; the sequence is KKGYDAWKTSQGNVMAASQANPLYTQSSNGGENPLYNSPT.

The protein belongs to the prespore-cell-inducing factor family.

The protein resides in the membrane. The sequence is that of Protein psiM (psiM) from Dictyostelium discoideum (Social amoeba).